The primary structure comprises 578 residues: MPFRLLIPLGLLCALLPQHHGAPGPDGSAPDPAHYRERVKAMFYHAYDSYLENAFPFDELRPLTCDGHDTWGSFSLTLIDALDTLLILGNVSEFQRVVEVLQDSVDFDIDVNASVFETNIRVVGGLLSAHLLSKKAGVEVEAGWPCSGPLLRMAEEAARKLLPAFQTPTGMPYGTVNLLHGVNPGETPVTCTAGIGTFIVEFATLSSLTGDPVFEDVARVALMRLWESRSDIGLVGNHIDVLTGKWVAQDAGIGAGVDSYFEYLVKGAILLQDKKLMAMFLEYNKAIRNYTRFDDWYLWVQMYKGTVSMPVFQSLEAYWPGLQSLIGDIDNAMRTFLNYYTVWKQFGGLPEFYNIPQGYTVEKREGYPLRPELIESAMYLYRATGDPTLLELGRDAVESIEKISKVECGFATIKDLRDHKLDNRMESFFLAETVKYLYLLFDPTNFIHNNGSTFDAVITPYGECILGAGGYIFNTEAHPIDPAALHCCQRLKEEQWEVEDLMREFYSLKRSRSKFQKNTVSSGPWEPPARPGTLFSPENHDQARERKPAKQKVPLLSCPSQPFTSKLALLGQVFLDSS.

The first 21 residues, 1–21, serve as a signal peptide directing secretion; it reads MPFRLLIPLGLLCALLPQHHG. Residues N90, N112, N289, and N450 are each glycosylated (N-linked (GlcNAc...) asparagine). Residues 517–557 form a disordered region; it reads KNTVSSGPWEPPARPGTLFSPENHDQARERKPAKQKVPLLS. A compositionally biased stretch (basic and acidic residues) spans 538–548; sequence ENHDQARERKP.

It belongs to the glycosyl hydrolase 47 family. Post-translationally, N-glycosylated. Expressed ubiquitously in all tissues tested with slightly higher levels detected in small intestine and peripheral blood leukocytes and weakest levels in brain and skeletal muscle.

It is found in the endoplasmic reticulum lumen. Its function is as follows. Involved in the endoplasmic reticulum-associated degradation (ERAD) pathway that targets misfolded glycoproteins for degradation in an N-glycan-dependent manner. May initiate ERAD by promoting the first mannose trimming step of ERAD substrates, from Man9GlcNAc2 to Man8GlcNAc2. Seems to recognize and bind to exposed hydrophobic regions in target proteins. This is ER degradation-enhancing alpha-mannosidase-like protein 2 (EDEM2) from Homo sapiens (Human).